The following is a 718-amino-acid chain: Glycine--tRNA ligase beta subunit (718 aa).

It belongs to the class-II aminoacyl-tRNA synthetase family. In terms of assembly, tetramer of two alpha and two beta subunits.

It localises to the cytoplasm. The enzyme catalyses tRNA(Gly) + glycine + ATP = glycyl-tRNA(Gly) + AMP + diphosphate. This Mesorhizobium japonicum (strain LMG 29417 / CECT 9101 / MAFF 303099) (Mesorhizobium loti (strain MAFF 303099)) protein is Glycine--tRNA ligase beta subunit.